A 265-amino-acid chain; its full sequence is Expansin-like A2 (265 aa).

Positions 1–21 are cleaved as a signal peptide; sequence MLQGFLFLLSVVLLFSSSAAA. Positions 42–148 constitute an Expansin-like EG45 domain; the sequence is SGACAYGSMA…RRVPCDYGNK (107 aa). N-linked (GlcNAc...) asparagine glycosylation is found at N100 and N103. An Expansin-like CBD domain is found at 162-244; it reads NYLAIKLLYQ…NWEAGKSYDA (83 aa).

Belongs to the expansin family. Expansin-like A subfamily.

Its subcellular location is the secreted. This is Expansin-like A2 (EXLA2) from Arabidopsis thaliana (Mouse-ear cress).